The chain runs to 634 residues: Dynein axonemal assembly factor 1 (634 aa).

The disordered stretch occupies residues 1-80; sequence MHPEVSEPPV…SRDDREDRGP (80 aa). The segment covering 22-42 has biased composition (basic and acidic residues); the sequence is AGDHGDAGPGIRKEEISETKE. Polar residues predominate over residues 48–62; it reads CTTSCPSQQQPSGDN. Basic and acidic residues predominate over residues 70 to 80; that stretch reads HSRDDREDRGP. 6 LRR repeats span residues 101–123, 124–145, 146–167, 168–189, 190–211, and 215–236; these read ALNDTLYLHFKGFDRIENLEEYT, GLRCLWLECNGIQRIENLQAQS, ELRCLFLQVNLLHKIENLEPLQ, KLDALNLSNNYIKTIENLSCLP, VLNTLQMAHNRLETVADIEHLR, and RLCVLDLSHNALSDPEILSVLE. Positions 249-288 constitute an LRRCT domain; that stretch reads NPVTKHIPNYRRTVTVRLKHLTYLDDRPVFPKDRACAEAW. Residues 326-336 are compositionally biased toward basic and acidic residues; that stretch reads EERKKARDRGE. The tract at residues 326–358 is disordered; it reads EERKKARDRGETPLPDSEGSIPTSPEAEEKQPM. A Phosphoserine modification is found at S349. The residue at position 462 (T462) is a Phosphothreonine. Phosphoserine occurs at positions 465 and 488. Disordered stretches follow at residues 481-505 and 559-634; these read ISSLSDDSDPELDELSLSTSEATPT and ELND…FGLD.

This sequence belongs to the DNAAF1 family.

The protein resides in the cell projection. The protein localises to the cilium. Its function is as follows. Cilium-specific protein required for the stability of the ciliary architecture. Plays a role in cytoplasmic preassembly of dynein arms. Involved in regulation of microtubule-based cilia and actin-based brush border microvilli. The protein is Dynein axonemal assembly factor 1 (Dnaaf1) of Mus musculus (Mouse).